Here is a 1476-residue protein sequence, read N- to C-terminus: SH3 and multiple ankyrin repeat domains protein 2 (1476 aa).

The span at 66–76 (LSPQLLQQTPS) shows a compositional bias: polar residues. Residues 66 to 134 (LSPQLLQQTP…GANKDSLSTF (69 aa)) are disordered. The SH3 domain occupies 147 to 206 (VPGRLFVAVKPYQPQVDGEIPLHRGDRVKVLSIGEGGFWEGSARGHIGWFPAECVEEVQC). V162 is subject to Phosphoserine. A PDZ domain is found at 247-341 (TVVLQKKDNE…HLILKVVTVT (95 aa)). The residue at position 372 (S372) is a Phosphoserine. The tract at residues 391-412 (RKKKDKPEEIVPASKPSRTAEN) is disordered. Position 456 is a phosphoserine (S456). The residue at position 485 (T485) is a Phosphothreonine. Residues 503 to 533 (LSMPDTSEDIPPPPQSVPPSPPPPSPTTYNC) are disordered. A compositionally biased stretch (pro residues) spans 512–528 (IPPPPQSVPPSPPPPSP). S586 is subject to Phosphoserine. 3 disordered regions span residues 659–916 (TIIV…KDRR), 946–983 (VPMAGPPLEEEEDREDGDTKPDHSPSTVPEGVPKTEGA), and 1057–1153 (PALA…ESMD). The span at 666-678 (STSSSGKSSQGSS) shows a compositional bias: low complexity. Positions 711–722 (VRDREKRLEARR) are enriched in basic and acidic residues. S724 carries the phosphoserine modification. Gly residues predominate over residues 783–795 (LGGGEAGAQGEAG). Residues 833–846 (RLLDPSSPLALALS) show a composition bias toward low complexity. Basic and acidic residues-rich tracts occupy residues 847–868 (ARDRAMQESQQGHKGEAPKADL) and 899–916 (RRQETENKYETDLGKDRR). T903 is subject to Phosphothreonine. The segment covering 1070–1085 (TSQPPTLNSSQPANST) has biased composition (polar residues). The segment covering 1119-1130 (VDSRSSSDHHLE) has biased composition (basic and acidic residues). Over residues 1131-1151 (TTSTISTVSSISTLSSEGGES) the composition is skewed to low complexity. An SH3-binding motif is present at residues 1169-1175 (PPVPPKP). 2 disordered regions span residues 1195 to 1216 (EDTDGFVIPPPAPPPPPGSAQA) and 1260 to 1403 (NRGK…ISNK). Pro residues predominate over residues 1202–1212 (IPPPAPPPPPG). The segment covering 1291 to 1305 (STVSGTRSTTVTFTV) has biased composition (low complexity). An O-linked (GlcNAc) threonine glycan is attached at T1292. The span at 1307-1317 (PGTSQPITLQS) shows a compositional bias: polar residues. Residues S1334 and S1338 each carry the phosphoserine modification. Residues 1364-1375 (LSDVFSLPSQSP) show a composition bias toward polar residues. A compositionally biased stretch (low complexity) spans 1387 to 1401 (RSRSPSPSILQQPIS). One can recognise an SAM domain in the interval 1413 to 1476 (WTKPDVADWL…ERALKQLLDR (64 aa)).

The protein belongs to the SHANK family. Is part of a complex with DLG4/PSD-95 and DLGAP1/GKAP. Interacts with CTTN/cortactin SH3 domain, DLGAP1/GKAP and alpha-latrotoxin receptor 1. Interacts with DNM2, DBNL, GRID2, BAIAP2, SLC9A3, PLCB3 and CFTR. Interacts (via proline-rich region) with PDE4D. Interacts with ABI1 (via SH3 domain). In terms of tissue distribution, detected in brain (at protein level), where it is highly expressed in Purkinje cells.

It is found in the apical cell membrane. Its subcellular location is the cytoplasm. The protein resides in the synapse. The protein localises to the postsynaptic density. It localises to the cell projection. It is found in the dendritic spine. Its subcellular location is the growth cone. In terms of biological role, seems to be an adapter protein in the postsynaptic density (PSD) of excitatory synapses that interconnects receptors of the postsynaptic membrane including NMDA-type and metabotropic glutamate receptors, and the actin-based cytoskeleton. May play a role in the structural and functional organization of the dendritic spine and synaptic junction. This Mus musculus (Mouse) protein is SH3 and multiple ankyrin repeat domains protein 2 (Shank2).